A 305-amino-acid chain; its full sequence is Sulfate adenylyltransferase subunit 2 (305 aa).

This sequence belongs to the PAPS reductase family. CysD subfamily. Heterodimer composed of CysD, the smaller subunit, and CysN.

The catalysed reaction is sulfate + ATP + H(+) = adenosine 5'-phosphosulfate + diphosphate. It functions in the pathway sulfur metabolism; hydrogen sulfide biosynthesis; sulfite from sulfate: step 1/3. With CysN forms the ATP sulfurylase (ATPS) that catalyzes the adenylation of sulfate producing adenosine 5'-phosphosulfate (APS) and diphosphate, the first enzymatic step in sulfur assimilation pathway. APS synthesis involves the formation of a high-energy phosphoric-sulfuric acid anhydride bond driven by GTP hydrolysis by CysN coupled to ATP hydrolysis by CysD. This Myxococcus xanthus (strain DK1622) protein is Sulfate adenylyltransferase subunit 2.